Reading from the N-terminus, the 61-residue chain is MAKKSMVVKSSKKQKFPVREYTRCERCGRPHSVYRKFKLCRICFRELAYKGQIPGVRKASW.

Residues cysteine 24, cysteine 27, cysteine 40, and cysteine 43 each contribute to the Zn(2+) site.

This sequence belongs to the universal ribosomal protein uS14 family. Zinc-binding uS14 subfamily. In terms of assembly, part of the 30S ribosomal subunit. Contacts proteins S3 and S10. Requires Zn(2+) as cofactor.

Its function is as follows. Binds 16S rRNA, required for the assembly of 30S particles and may also be responsible for determining the conformation of the 16S rRNA at the A site. The sequence is that of Small ribosomal subunit protein uS14 from Staphylococcus carnosus (strain TM300).